The following is a 579-amino-acid chain: Putative adenine deaminase OB0751 (579 aa).

This sequence belongs to the metallo-dependent hydrolases superfamily. Adenine deaminase family.

The enzyme catalyses adenine + H2O + H(+) = hypoxanthine + NH4(+). The polypeptide is Putative adenine deaminase OB0751 (Oceanobacillus iheyensis (strain DSM 14371 / CIP 107618 / JCM 11309 / KCTC 3954 / HTE831)).